The following is an 818-amino-acid chain: Phenylalanine--tRNA ligase beta subunit (818 aa).

Residues 39-148 enclose the tRNA-binding domain; it reads AAELQKFEVA…EDAVVGENFT (110 aa). Positions 423–498 constitute a B5 domain; that stretch reads SQKKPLDFSA…RIYGYDKIES (76 aa). Mg(2+) is bound by residues Asp-476, Asp-482, Glu-485, and Glu-486. The FDX-ACB domain occupies 724-817; that stretch reads SDFQANFRDY…ISQKFQGTLR (94 aa).

The protein belongs to the phenylalanyl-tRNA synthetase beta subunit family. Type 1 subfamily. In terms of assembly, tetramer of two alpha and two beta subunits. It depends on Mg(2+) as a cofactor.

The protein resides in the cytoplasm. The catalysed reaction is tRNA(Phe) + L-phenylalanine + ATP = L-phenylalanyl-tRNA(Phe) + AMP + diphosphate + H(+). This is Phenylalanine--tRNA ligase beta subunit from Rickettsia conorii (strain ATCC VR-613 / Malish 7).